A 469-amino-acid chain; its full sequence is MKAMEGKIIQVLGPVVDVEFESYLPAIFEALDINFEVNGVQKSLVLEVAAHLGGNRVRAIAMDMTEGLVRNQVVKARGKMIEVPVGEEVLGRIFNVVGESIDNLEPLKPSLTWPIHRKAPSFEQQSTKTEMFETGIKVIDLLAPYSKGGKVGLFGGAGVGKTVIIMELIHNVAYKHNGYSVFAGVGERTREGNDLYFEMKEGGVLDKVALCYGQMNEPPGARNRIAFTGLTMAEYFRDEKGLDVLMFIDNIFRYAQSGAEMSALLGRIPSAVGYQPTLAGEMGKLQERIASTKNGSITSVQAVYVPADDLTDPAPASVFAHLDATTVLNRKIAEKGIYPAVDPLDSTSRILSPQMIGEKHYEVATGIQQVLQKYKDLQDIIAILGLDELSEEDKKTVERARKIEKFLSQPFFVAEVFTGSPGKYVTLQETLEGFGGILEGKYDHIPENAFYMVGSIQEVLEKAKNMKNS.

Position 155–162 (155–162 (GGAGVGKT)) interacts with ATP.

It belongs to the ATPase alpha/beta chains family. As to quaternary structure, F-type ATPases have 2 components, CF(1) - the catalytic core - and CF(0) - the membrane proton channel. CF(1) has five subunits: alpha(3), beta(3), gamma(1), delta(1), epsilon(1). CF(0) has three main subunits: a(1), b(2) and c(9-12). The alpha and beta chains form an alternating ring which encloses part of the gamma chain. CF(1) is attached to CF(0) by a central stalk formed by the gamma and epsilon chains, while a peripheral stalk is formed by the delta and b chains.

The protein resides in the cell inner membrane. It carries out the reaction ATP + H2O + 4 H(+)(in) = ADP + phosphate + 5 H(+)(out). In terms of biological role, produces ATP from ADP in the presence of a proton gradient across the membrane. The catalytic sites are hosted primarily by the beta subunits. In Helicobacter pylori (strain P12), this protein is ATP synthase subunit beta.